Reading from the N-terminus, the 397-residue chain is Enoyl-[acyl-carrier-protein] reductase [NADH] (397 aa).

Residues 48-53 (GASTGY), 74-75 (FE), 111-112 (DA), and 139-140 (LA) contribute to the NAD(+) site. Tyr-225 lines the substrate pocket. Tyr-235 acts as the Proton donor in catalysis. Residues Lys-244 and 273–275 (VVT) contribute to the NAD(+) site.

It belongs to the TER reductase family. As to quaternary structure, monomer.

It carries out the reaction a 2,3-saturated acyl-[ACP] + NAD(+) = a (2E)-enoyl-[ACP] + NADH + H(+). It participates in lipid metabolism; fatty acid biosynthesis. In terms of biological role, involved in the final reduction of the elongation cycle of fatty acid synthesis (FAS II). Catalyzes the reduction of a carbon-carbon double bond in an enoyl moiety that is covalently linked to an acyl carrier protein (ACP). This is Enoyl-[acyl-carrier-protein] reductase [NADH] from Edwardsiella ictaluri (strain 93-146).